A 415-amino-acid polypeptide reads, in one-letter code: Serine hydroxymethyltransferase 3 (415 aa).

(6S)-5,6,7,8-tetrahydrofolate contacts are provided by residues leucine 122 and 126–128 (GHL). Lysine 230 carries the post-translational modification N6-(pyridoxal phosphate)lysine.

It belongs to the SHMT family. Homodimer. It depends on pyridoxal 5'-phosphate as a cofactor.

The protein localises to the cytoplasm. It catalyses the reaction (6R)-5,10-methylene-5,6,7,8-tetrahydrofolate + glycine + H2O = (6S)-5,6,7,8-tetrahydrofolate + L-serine. It participates in one-carbon metabolism; tetrahydrofolate interconversion. It functions in the pathway amino-acid biosynthesis; glycine biosynthesis; glycine from L-serine: step 1/1. Functionally, catalyzes the reversible interconversion of serine and glycine with tetrahydrofolate (THF) serving as the one-carbon carrier. This reaction serves as the major source of one-carbon groups required for the biosynthesis of purines, thymidylate, methionine, and other important biomolecules. Also exhibits THF-independent aldolase activity toward beta-hydroxyamino acids, producing glycine and aldehydes, via a retro-aldol mechanism. This chain is Serine hydroxymethyltransferase 3, found in Burkholderia lata (strain ATCC 17760 / DSM 23089 / LMG 22485 / NCIMB 9086 / R18194 / 383).